Consider the following 155-residue polypeptide: Small ribosomal subunit protein uS7cz/uS7cy (155 aa).

The protein belongs to the universal ribosomal protein uS7 family. In terms of assembly, part of the 30S ribosomal subunit.

The protein localises to the plastid. It localises to the chloroplast. One of the primary rRNA binding proteins, it binds directly to 16S rRNA where it nucleates assembly of the head domain of the 30S subunit. This is Small ribosomal subunit protein uS7cz/uS7cy (rps7-A) from Coffea arabica (Arabian coffee).